Reading from the N-terminus, the 330-residue chain is Cyclic AMP receptor-like protein E (330 aa).

Residues 1 to 10 are Extracellular-facing; sequence MLSLSSYVLN. Residues 11-31 form a helical membrane-spanning segment; the sequence is LVGSILCLIGCLFIIGHFFWI. Residues 32–40 lie on the Cytoplasmic side of the membrane; the sequence is PLLRTSLSR. Residues 41-61 traverse the membrane as a helical segment; it reads IIIYPTFILLLYDMVSFPSFI. The Extracellular portion of the chain corresponds to 62-85; that stretch reads SKTADLYIERSTIICNFQEAIIQY. Residues 86–106 form a helical membrane-spanning segment; the sequence is LILSNFIWSVCISVNLLYLCF. Residues 107–116 are Cytoplasmic-facing; that stretch reads SPNKNLKKNE. Residues 117-137 traverse the membrane as a helical segment; that stretch reads LLYHLCSWGIPLIVVVITKIP. The Extracellular portion of the chain corresponds to 138–156; that stretch reads NMISDNGNQCRFKSPNYIK. A helical transmembrane segment spans residues 157–177; it reads FYLETILFIAFMLFNFIVAFI. Residues 178-213 lie on the Cytoplasmic side of the membrane; that stretch reads TIKHIISGNLRESETTTTSVLFVNEKKITTKKIVWR. Residues 214–234 traverse the membrane as a helical segment; the sequence is LLLYPSILSICYIMTLVLSIY. The Extracellular portion of the chain corresponds to 235 to 274; it reads QFSTESYGSGGAYANSINNKRNDKNTESGNSNNNNNSYIE. A glycan (N-linked (GlcNAc...) asparagine) is linked at Asn269. A helical transmembrane segment spans residues 275-295; sequence ILLYISKAIFLLQGFFNALVY. The Cytoplasmic portion of the chain corresponds to 296–330; it reads LRSSKLRDRYKKITIFRKIFWRDEADYQSINDGFN.

Belongs to the G-protein coupled receptor 5 family.

The protein localises to the membrane. Functionally, receptor for cAMP. The chain is Cyclic AMP receptor-like protein E (crlE) from Dictyostelium discoideum (Social amoeba).